A 419-amino-acid polypeptide reads, in one-letter code: L-rhamnose isomerase (419 aa).

Mn(2+) contacts are provided by His262, Asp294, and Asp296.

It belongs to the rhamnose isomerase family. Homotetramer. The cofactor is Mn(2+).

It localises to the cytoplasm. It carries out the reaction L-rhamnopyranose = L-rhamnulose. Its pathway is carbohydrate degradation; L-rhamnose degradation; glycerone phosphate from L-rhamnose: step 1/3. Catalyzes the interconversion of L-rhamnose and L-rhamnulose. This is L-rhamnose isomerase from Enterobacter sp. (strain 638).